We begin with the raw amino-acid sequence, 126 residues long: Protein ApaG (126 aa).

In terms of domain architecture, ApaG spans Ser2–His126.

The protein is Protein ApaG of Shewanella sp. (strain MR-4).